Here is a 244-residue protein sequence, read N- to C-terminus: tRNA (guanine-N(1)-)-methyltransferase (244 aa).

S-adenosyl-L-methionine contacts are provided by residues G112 and 131–136; that span reads LGDFIL. Residues 211–244 are disordered; that stretch reads IKRTSDRRPDLLEKWQQEKKPGSREQGSREQGEK.

It belongs to the RNA methyltransferase TrmD family. In terms of assembly, homodimer.

It localises to the cytoplasm. It catalyses the reaction guanosine(37) in tRNA + S-adenosyl-L-methionine = N(1)-methylguanosine(37) in tRNA + S-adenosyl-L-homocysteine + H(+). Its function is as follows. Specifically methylates guanosine-37 in various tRNAs. This is tRNA (guanine-N(1)-)-methyltransferase from Trichormus variabilis (strain ATCC 29413 / PCC 7937) (Anabaena variabilis).